A 523-amino-acid chain; its full sequence is Volkensin (523 aa).

Residues tyrosine 74, tyrosine 113, glutamate 162, and arginine 165 contribute to the active site. 111–113 (GGY) provides a ligand contact to AMP. Cystine bridges form between cysteine 245/cysteine 269 and cysteine 285/cysteine 304. Residues 251–265 (QSDSPLVIRSFVDRN) constitute a propeptide, linker peptide. One can recognise a Ricin B-type lectin 1 domain in the interval 270–397 (PSGETTAFIV…YAASQAWRVT (128 aa)). A carbohydrate is bound by residues 287 to 291 (DVKVE), glutamine 300, lysine 305, and asparagine 311. A disulfide bridge connects residues cysteine 328 and cysteine 343. Residues asparagine 358 and asparagine 398 each coordinate a carbohydrate. N-linked (GlcNAc...) asparagine glycosylation is found at asparagine 358 and asparagine 398. The region spanning 400 to 523 (TVPTVTTIVG…HGNSNQQWFL (124 aa)) is the Ricin B-type lectin 2 domain. Intrachain disulfides connect cysteine 414/cysteine 427 and cysteine 453/cysteine 471.

This sequence in the N-terminal section; belongs to the ribosome-inactivating protein family. Type 2 RIP subfamily. Disulfide-linked dimer of A and B chains. N-glycosylated. Contains mannose and galactose. In terms of tissue distribution, expressed in roots (at protein level). Expressed in seeds (at protein level).

The catalysed reaction is Endohydrolysis of the N-glycosidic bond at one specific adenosine on the 28S rRNA.. Hemagglutinating activity is inhibited by galactose and structurally related sugars. Functionally, has N-glycosidase activity and is responsible for inhibiting protein synthesis through the catalytic inactivation of 60S ribosomal subunits by removing a specific adenine of 28S rRNA. Inhibits GTP-dependent binding of EF2 (elongation factor 2) to ribosomes. In terms of biological role, binds to cell receptors and probably facilitates the entry into the cell of the A chain. Also acts as a galactose-specific lectin responsible for cell agglutination. The chain is Volkensin from Adenia volkensii (Kilyambiti plant).